Here is a 1590-residue protein sequence, read N- to C-terminus: von Willebrand factor D and EGF domain-containing protein (1590 aa).

Residues 1-20 (MPGGACVLVIALMFLAWGEA) form the signal peptide. The N-linked (GlcNAc...) asparagine glycan is linked to N367. The 184-residue stretch at 423 to 606 (AYCYTFTDPH…EWRILPGKSM (184 aa)) folds into the VWFD domain. Disulfide bonds link C425/C565 and C468/C477. Residues N703 and N968 are each glycosylated (N-linked (GlcNAc...) asparagine). In terms of domain architecture, EGF-like 1 spans 1177-1216 (TVKSCDCLNGGSCVSDRNFSPGSGVYLCVCLPGFHGSLCE). 3 cysteine pairs are disulfide-bonded: C1181/C1189, C1183/C1204, and C1206/C1215. A compositionally biased stretch (basic and acidic residues) spans 1268-1280 (DKSVNKEEDDKNA). The tract at residues 1268-1288 (DKSVNKEEDDKNAQGRKRHVK) is disordered. EGF-like domains follow at residues 1294–1326 (AFTI…SNCQ), 1358–1390 (DEEH…PRCE), 1422–1454 (STAL…EHCQ), 1455–1486 (NAFC…RRFQ), 1518–1550 (NTPI…VRCQ), and 1551–1582 (IPIC…VKCE). Cystine bridges form between C1298/C1308, C1302/C1314, C1316/C1325, C1362/C1372, C1366/C1378, C1380/C1389, C1426/C1436, C1430/C1442, C1444/C1453, C1458/C1468, C1462/C1474, C1522/C1532, C1526/C1538, C1540/C1549, C1554/C1564, C1558/C1570, and C1572/C1581.

It localises to the secreted. In Homo sapiens (Human), this protein is von Willebrand factor D and EGF domain-containing protein (VWDE).